A 384-amino-acid chain; its full sequence is Dual specificity protein phosphatase 5 (384 aa).

The Rhodanese domain occupies 19–141 (AEARCVVLDC…FYSQYPECCV (123 aa)). A Nuclear localization signal motif is present at residues 53 to 74 (RRARGGAVSARYVLADEAARAR). Positions 178 to 319 (GPVEILPFLY…LLQYESEILP (142 aa)) constitute a Tyrosine-protein phosphatase domain. C263 functions as the Phosphocysteine intermediate in the catalytic mechanism.

It belongs to the protein-tyrosine phosphatase family. Non-receptor class dual specificity subfamily.

Its subcellular location is the nucleus. It catalyses the reaction O-phospho-L-tyrosyl-[protein] + H2O = L-tyrosyl-[protein] + phosphate. It carries out the reaction O-phospho-L-seryl-[protein] + H2O = L-seryl-[protein] + phosphate. The enzyme catalyses O-phospho-L-threonyl-[protein] + H2O = L-threonyl-[protein] + phosphate. In terms of biological role, dual specificity protein phosphatase; active with phosphotyrosine, phosphoserine and phosphothreonine residues. The highest relative activity is toward ERK1. This is Dual specificity protein phosphatase 5 (Dusp5) from Rattus norvegicus (Rat).